Reading from the N-terminus, the 921-residue chain is Collagen alpha-1(IX) chain (921 aa).

A signal peptide spans 1 to 23 (MKNFWKISVFFCVCSCLGPWVSA). Positions 24–268 (TLKRRARFPA…ITTSQTTDER (245 aa)) are nonhelical region (NC4). 2 disulfides stabilise this stretch: C44–C242 and C198–C252. Residues 50 to 244 (GQDDLPGFDL…LQWMLIHCDP (195 aa)) enclose the Laminin G-like domain. Residues D213, D215, and H253 each contribute to the Zn(2+) site. Disordered regions lie at residues 253-759 (HELP…APTD) and 783-921 (RPDT…GPDK). Collagen-like domains follow at residues 269–325 (GPPG…PGAD), 326–356 (GLTG…GFPG), 358–403 (GIPG…GTIG), 416–472 (PPGR…GLRG), 473–512 (ITGI…PPGE), 604–656 (GKPG…LPGP), 657–711 (PGLP…PGEP), and 712–755 (GLRG…PPGR). The interval 269–405 (GPPGEQGPPG…PGPSGTIGFH (137 aa)) is triple-helical region (COL3). Composition is skewed to pro residues over residues 273–285 (EQGP…PPGV) and 298–310 (KGPP…PGDP). The span at 368-383 (TTGLPGELGRVGPIGD) shows a compositional bias: low complexity. A compositionally biased stretch (pro residues) spans 387 to 398 (RGPPGPPGPPGP). The segment at 406–417 (DGDPLCPNSCPP) is nonhelical region (NC3). The interval 418–756 (GRSGYPGLPG…PGIQGPPGRA (339 aa)) is triple-helical region (COL2). The span at 479 to 489 (DKGEKGARGFD) shows a compositional bias: basic and acidic residues. 2 stretches are compositionally biased toward low complexity: residues 594–632 (PGKP…PVGP) and 639–650 (PGKLGSVGSPGL). Positions 757 to 786 (PTDQHIKQVCMRVVQEHFVEMAASLKRPDT) are nonhelical region (NC2). Residues 787–901 (GASGLPGRPG…PGPPGPPGFC (115 aa)) form a triple-helical region (COL1) region. Residues 790-847 (GLPGRPGPPGPPGPPGENGFPGQMGIRGLPGIKGPPGALGLRGPKGDLGEKGERGPPG) enclose the Collagen-like 9 domain. Residues 794-804 (RPGPPGPPGPP) are compositionally biased toward pro residues. Over residues 833–845 (PKGDLGEKGERGP) the composition is skewed to basic and acidic residues. Residues 888–900 (VPGPPGPPGPPGF) show a composition bias toward pro residues. The interval 902–921 (EPASCTLQSGQRAFSKGPDK) is nonhelical region (NC1).

It belongs to the fibril-associated collagens with interrupted helices (FACIT) family. Heterotrimer of an alpha 1(IX), an alpha 2(IX) and an alpha 3(IX) chain. Covalently linked to the telopeptides of type II collagen by lysine-derived cross-links. Post-translationally, prolines at the third position of the tripeptide repeating unit (G-X-Y) are hydroxylated in some or all of the chains.

It localises to the secreted. The protein resides in the extracellular space. It is found in the extracellular matrix. In terms of biological role, structural component of hyaline cartilage and vitreous of the eye. In Mus musculus (Mouse), this protein is Collagen alpha-1(IX) chain (Col9a1).